A 358-amino-acid chain; its full sequence is Probable branched-chain-amino-acid aminotransferase (358 aa).

Lys196 carries the post-translational modification N6-(pyridoxal phosphate)lysine.

The protein belongs to the class-IV pyridoxal-phosphate-dependent aminotransferase family. Pyridoxal 5'-phosphate serves as cofactor.

It carries out the reaction L-leucine + 2-oxoglutarate = 4-methyl-2-oxopentanoate + L-glutamate. It catalyses the reaction L-isoleucine + 2-oxoglutarate = (S)-3-methyl-2-oxopentanoate + L-glutamate. The enzyme catalyses L-valine + 2-oxoglutarate = 3-methyl-2-oxobutanoate + L-glutamate. It participates in amino-acid biosynthesis; L-isoleucine biosynthesis; L-isoleucine from 2-oxobutanoate: step 4/4. The protein operates within amino-acid biosynthesis; L-leucine biosynthesis; L-leucine from 3-methyl-2-oxobutanoate: step 4/4. It functions in the pathway amino-acid biosynthesis; L-valine biosynthesis; L-valine from pyruvate: step 4/4. Functionally, acts on leucine, isoleucine and valine. The polypeptide is Probable branched-chain-amino-acid aminotransferase (ilvE) (Staphylococcus epidermidis (strain ATCC 12228 / FDA PCI 1200)).